The sequence spans 123 residues: Small ribosomal subunit protein uS12 (123 aa).

At Asp89 the chain carries 3-methylthioaspartic acid.

It belongs to the universal ribosomal protein uS12 family. Part of the 30S ribosomal subunit. Contacts proteins S8 and S17. May interact with IF1 in the 30S initiation complex.

Functionally, with S4 and S5 plays an important role in translational accuracy. Interacts with and stabilizes bases of the 16S rRNA that are involved in tRNA selection in the A site and with the mRNA backbone. Located at the interface of the 30S and 50S subunits, it traverses the body of the 30S subunit contacting proteins on the other side and probably holding the rRNA structure together. The combined cluster of proteins S8, S12 and S17 appears to hold together the shoulder and platform of the 30S subunit. This chain is Small ribosomal subunit protein uS12, found in Brucella abortus (strain S19).